The primary structure comprises 326 residues: Pyruvate dehydrogenase E1 component subunit beta (326 aa).

Glu62 serves as a coordination point for thiamine diphosphate.

Heterodimer of an alpha and a beta chain. The cofactor is thiamine diphosphate.

The enzyme catalyses N(6)-[(R)-lipoyl]-L-lysyl-[protein] + pyruvate + H(+) = N(6)-[(R)-S(8)-acetyldihydrolipoyl]-L-lysyl-[protein] + CO2. In terms of biological role, the pyruvate dehydrogenase complex catalyzes the overall conversion of pyruvate to acetyl-CoA and CO(2). It contains multiple copies of three enzymatic components: pyruvate dehydrogenase (E1), dihydrolipoamide acetyltransferase (E2) and lipoamide dehydrogenase (E3). The chain is Pyruvate dehydrogenase E1 component subunit beta (pdhB) from Mycoplasma genitalium (strain ATCC 33530 / DSM 19775 / NCTC 10195 / G37) (Mycoplasmoides genitalium).